The following is a 345-amino-acid chain: Sesquiterpene synthase PILCRDRAFT_825684 (345 aa).

Aspartate 91, asparagine 226, serine 230, and glutamate 234 together coordinate Mg(2+). The DDXXD motif motif lies at 91–95 (DELTD). Residues arginine 316 and tyrosine 317 each coordinate (2E,6E)-farnesyl diphosphate.

This sequence belongs to the terpene synthase family. Requires Mg(2+) as cofactor.

The enzyme catalyses (2E,6E)-farnesyl diphosphate = viridiflorene + diphosphate. In terms of biological role, terpene cyclase that catalyzes the cyclization of farnesyl diphosphate (FPP) to various sesquiterpenes, including beta-elemene, viridiflorene and gamma-cadinene. Gamma-cadinene is the major product of PILCRDRAFT_825684. This chain is Sesquiterpene synthase PILCRDRAFT_825684, found in Piloderma croceum (strain F 1598).